We begin with the raw amino-acid sequence, 333 residues long: DNA-directed RNA polymerase subunit alpha (333 aa).

Residues 1 to 246 form an alpha N-terminal domain (alpha-NTD) region; sequence MKKMVQIKYK…AHLQVIGDVK (246 aa). Residues 262 to 333 form an alpha C-terminal domain (alpha-CTD) region; that stretch reads VEPSIHSVDI…YNVTLNRGEK (72 aa).

This sequence belongs to the RNA polymerase alpha chain family. Homodimer. The RNAP catalytic core consists of 2 alpha, 1 beta, 1 beta' and 1 omega subunit. When a sigma factor is associated with the core the holoenzyme is formed, which can initiate transcription.

It carries out the reaction RNA(n) + a ribonucleoside 5'-triphosphate = RNA(n+1) + diphosphate. DNA-dependent RNA polymerase catalyzes the transcription of DNA into RNA using the four ribonucleoside triphosphates as substrates. This chain is DNA-directed RNA polymerase subunit alpha, found in Mycoplasmopsis pulmonis (strain UAB CTIP) (Mycoplasma pulmonis).